We begin with the raw amino-acid sequence, 43 residues long: Histone H3 (43 aa).

The nucleosome is a histone octamer containing two molecules each of H2A, H2B, H3 and H4 assembled in one H3-H4 heterotetramer and two H2A-H2B heterodimers. The octamer wraps approximately 147 bp of DNA.

It localises to the nucleus. The protein resides in the chromosome. Functionally, core component of nucleosome. Nucleosomes wrap and compact DNA into chromatin, limiting DNA accessibility to the cellular machineries which require DNA as a template. Histones thereby play a central role in transcription regulation, DNA repair, DNA replication and chromosomal stability. DNA accessibility is regulated via a complex set of post-translational modifications of histones, also called histone code, and nucleosome remodeling. The protein is Histone H3 of Penaeus vannamei (Whiteleg shrimp).